The sequence spans 1053 residues: Probable dihydropyrimidine dehydrogenase [NADP(+)] (1053 aa).

A 4Fe-4S ferredoxin-type 1 domain is found at 84–115; the sequence is ERGALKEAMRCLKCADAPCQKSCPTQLDIKSF. Positions 94, 97, 102, 106, 145, 151, 155, and 171 each coordinate [4Fe-4S] cluster. Residues 207–211, 231–239, Arg248, and Leu274 contribute to the FAD site; these read GCGPA and EKRAYIGGL. NADP(+) contacts are provided by residues 354–357, 378–379, Arg385, 451–453, and 495–501; these read AGDT, RK, AFG, and DVAGVAE. FAD is bound at residue 494 to 503; that stretch reads GDVAGVAETT. FMN-binding positions include Ser574 and 598–599; that span reads KT. Residues Asn633 and 692 to 694 contribute to the substrate site; that span reads NLS. Cys695 functions as the Proton acceptor in the catalytic mechanism. An FMN-binding site is contributed by Lys733. 760–761 is a binding site for substrate; the sequence is NT. FMN is bound by residues Gly791, 817-819, and 840-841; these read TGG and CS. 2 consecutive 4Fe-4S ferredoxin-type domains span residues 949–981 and 983–1013; these read EVAI…FDAV and HQPH…MVPR. The [4Fe-4S] cluster site is built by Cys958, Cys961, Cys964, Cys968, Cys992, Cys995, Cys998, and Cys1002.

The protein belongs to the dihydropyrimidine dehydrogenase family. It depends on [4Fe-4S] cluster as a cofactor. FAD is required as a cofactor. FMN serves as cofactor.

It catalyses the reaction 5,6-dihydrouracil + NADP(+) = uracil + NADPH + H(+). The protein operates within amino-acid biosynthesis; beta-alanine biosynthesis. Its function is as follows. Involved in pyrimidine base degradation. Catalyzes the reduction of uracil and thymine. Also involved the degradation of the chemotherapeutic drug 5-fluorouracil. The polypeptide is Probable dihydropyrimidine dehydrogenase [NADP(+)] (Caenorhabditis briggsae).